We begin with the raw amino-acid sequence, 272 residues long: Soluble interferon gamma receptor OPG193 (272 aa).

Positions 1 to 13 are cleaved as a signal peptide; it reads MRYIIILAVLFIN. 3 N-linked (GlcNAc...) asparagine; by host glycosylation sites follow: Asn-42, Asn-150, and Asn-267.

The protein belongs to the type II cytokine receptor family. Homodimer. Interacts with host IFNG.

The protein localises to the secreted. Its function is as follows. Counteracts the antiviral effects of host IFN-gamma. Acts as a soluble IFN-gamma receptor and thus inhibits the interaction between host IFN-gamma and its receptor. The polypeptide is Soluble interferon gamma receptor OPG193 (OPG193) (Bos taurus (Bovine)).